The chain runs to 302 residues: Probable 2-(5''-triphosphoribosyl)-3'-dephosphocoenzyme-A synthase 1 (302 aa).

Belongs to the CitG/MdcB family.

It catalyses the reaction 3'-dephospho-CoA + ATP = 2'-(5''-triphospho-alpha-D-ribosyl)-3'-dephospho-CoA + adenine. The polypeptide is Probable 2-(5''-triphosphoribosyl)-3'-dephosphocoenzyme-A synthase 1 (Salmonella typhi).